A 183-amino-acid polypeptide reads, in one-letter code: Nascent polypeptide-associated complex subunit beta (183 aa).

Residues 62 to 127 (GADDKKLQTT…GEEKELTELV (66 aa)) enclose the NAC-A/B domain. The disordered stretch occupies residues 150-183 (QNMQKQAGTEGKKDEDEDDIPDLVEGENFESNVE). The span at 164–183 (EDEDDIPDLVEGENFESNVE) shows a compositional bias: acidic residues.

Belongs to the NAC-beta family. Part of the nascent polypeptide-associated complex (NAC), consisting of egd2 and egd1. NAC associates with ribosomes via egd1.

The protein resides in the cytoplasm. It is found in the nucleus. Functionally, component of the nascent polypeptide-associated complex (NAC), a dynamic component of the ribosomal exit tunnel, protecting the emerging polypeptides from interaction with other cytoplasmic proteins to ensure appropriate nascent protein targeting. The NAC complex also promotes mitochondrial protein import by enhancing productive ribosome interactions with the outer mitochondrial membrane and blocks the inappropriate interaction of ribosomes translating non-secretory nascent polypeptides with translocation sites in the membrane of the endoplasmic reticulum. EGD1 may act as a transcription factor that exert a negative effect on the expression of several genes that are transcribed by RNA polymerase II. In Neosartorya fischeri (strain ATCC 1020 / DSM 3700 / CBS 544.65 / FGSC A1164 / JCM 1740 / NRRL 181 / WB 181) (Aspergillus fischerianus), this protein is Nascent polypeptide-associated complex subunit beta (egd1).